We begin with the raw amino-acid sequence, 271 residues long: Probable L,D-transpeptidase 3 (271 aa).

The 144-residue stretch at 127 to 270 (VVGVASISQH…VDIGDPVIVQ (144 aa)) folds into the L,D-TPase catalytic domain. The Proton donor/acceptor role is filled by H228. Residue C246 is the Nucleophile of the active site.

It functions in the pathway cell wall biogenesis; peptidoglycan biosynthesis. Is irreversibly inactivated by the beta-lactam carbapenems via the formation of a covalent adduct resulting from acylation of the catalytic Cys. Imipenem is the most efficient drug for in vitro LdtMt3/Rv1433 inactivation. Functionally, probable L,D-transpeptidase that may perform as-yet-unknown cross-linking reactions in M.tuberculosis. Is not able to generate 3-&gt;3 cross-links in peptidoglycan, using tetrapeptide stems as acyl donor substrates. May function in the anchoring of proteins to peptidoglycan. This Mycobacterium tuberculosis (strain ATCC 25618 / H37Rv) protein is Probable L,D-transpeptidase 3.